Reading from the N-terminus, the 173-residue chain is NADH-quinone oxidoreductase subunit I 2 (173 aa).

4Fe-4S ferredoxin-type domains are found at residues 41–73 (IVLT…LAKA) and 83–112 (EYFR…LTPD). Residues Cys-53, Cys-56, Cys-59, Cys-63, Cys-92, Cys-95, Cys-98, and Cys-102 each contribute to the [4Fe-4S] cluster site. A compositionally biased stretch (basic and acidic residues) spans 153–163 (GKDKGEAEHEA). A disordered region spans residues 153-173 (GKDKGEAEHEAPPVNLKGLLP).

It belongs to the complex I 23 kDa subunit family. In terms of assembly, NDH-1 is composed of 14 different subunits. Subunits NuoA, H, J, K, L, M, N constitute the membrane sector of the complex. The cofactor is [4Fe-4S] cluster.

Its subcellular location is the cell inner membrane. The catalysed reaction is a quinone + NADH + 5 H(+)(in) = a quinol + NAD(+) + 4 H(+)(out). Its function is as follows. NDH-1 shuttles electrons from NADH, via FMN and iron-sulfur (Fe-S) centers, to quinones in the respiratory chain. The immediate electron acceptor for the enzyme in this species is believed to be ubiquinone. Couples the redox reaction to proton translocation (for every two electrons transferred, four hydrogen ions are translocated across the cytoplasmic membrane), and thus conserves the redox energy in a proton gradient. The protein is NADH-quinone oxidoreductase subunit I 2 of Rhodopseudomonas palustris (strain ATCC BAA-98 / CGA009).